Consider the following 434-residue polypeptide: Mitochondrial distribution and morphology protein 12 (434 aa).

An SMP-LTD domain is found at 1–434 (MSIDIDWERA…VYPSFWTFLV (434 aa)). Residues 70–83 (YEEDDNENFSESSE) show a composition bias toward acidic residues. 2 disordered regions span residues 70–141 (YEED…LRSP) and 181–275 (TPLG…DDLP). Over residues 86–97 (SPTREPVDRYGS) the composition is skewed to basic and acidic residues. Polar residues predominate over residues 215–237 (SAQSRPSTANTGNTLLSRGSMSS).

This sequence belongs to the MDM12 family. Component of the ER-mitochondria encounter structure (ERMES) or MDM complex, composed of MMM1, MDM10, MDM12 and MDM34. An MMM1 homodimer associates with one molecule of MDM12 on each side in a pairwise head-to-tail manner, and the SMP-LTD domains of MMM1 and MDM12 generate a continuous hydrophobic tunnel for phospholipid trafficking.

The protein resides in the mitochondrion outer membrane. It is found in the endoplasmic reticulum membrane. In terms of biological role, component of the ERMES/MDM complex, which serves as a molecular tether to connect the endoplasmic reticulum (ER) and mitochondria. Components of this complex are involved in the control of mitochondrial shape and protein biogenesis, and function in nonvesicular lipid trafficking between the ER and mitochondria. MDM12 is required for the interaction of the ER-resident membrane protein MMM1 and the outer mitochondrial membrane-resident beta-barrel protein MDM10. The MDM12-MMM1 subcomplex functions in the major beta-barrel assembly pathway that is responsible for biogenesis of all mitochondrial outer membrane beta-barrel proteins, and acts in a late step after the SAM complex. The MDM10-MDM12-MMM1 subcomplex further acts in the TOM40-specific pathway after the action of the MDM12-MMM1 complex. Essential for establishing and maintaining the structure of mitochondria and maintenance of mtDNA nucleoids. The chain is Mitochondrial distribution and morphology protein 12 from Blastomyces gilchristii (strain SLH14081) (Blastomyces dermatitidis).